We begin with the raw amino-acid sequence, 338 residues long: DNA-directed RNA polymerase subunit alpha (338 aa).

Positions Met-1–Glu-234 are alpha N-terminal domain (alpha-NTD). Positions Phe-250–Tyr-338 are alpha C-terminal domain (alpha-CTD).

This sequence belongs to the RNA polymerase alpha chain family. In terms of assembly, homodimer. The RNAP catalytic core consists of 2 alpha, 1 beta, 1 beta' and 1 omega subunit. When a sigma factor is associated with the core the holoenzyme is formed, which can initiate transcription.

It catalyses the reaction RNA(n) + a ribonucleoside 5'-triphosphate = RNA(n+1) + diphosphate. In terms of biological role, DNA-dependent RNA polymerase catalyzes the transcription of DNA into RNA using the four ribonucleoside triphosphates as substrates. The chain is DNA-directed RNA polymerase subunit alpha from Methylocella silvestris (strain DSM 15510 / CIP 108128 / LMG 27833 / NCIMB 13906 / BL2).